Reading from the N-terminus, the 395-residue chain is Chorismate synthase (395 aa).

2 residues coordinate NADP(+): Arg-40 and Arg-46. FMN contacts are provided by residues 135 to 137 (RAS) and 256 to 257 (QA). Over residues 272–283 (RRGSQAHDEMRP) the composition is skewed to basic and acidic residues. The disordered stretch occupies residues 272–296 (RRGSQAHDEMRPGPDGILRSTNRAG). FMN-binding positions include Gly-300, 315-319 (KPIST), and Arg-341.

It belongs to the chorismate synthase family. In terms of assembly, homotetramer. The cofactor is FMNH2.

It catalyses the reaction 5-O-(1-carboxyvinyl)-3-phosphoshikimate = chorismate + phosphate. It functions in the pathway metabolic intermediate biosynthesis; chorismate biosynthesis; chorismate from D-erythrose 4-phosphate and phosphoenolpyruvate: step 7/7. Its function is as follows. Catalyzes the anti-1,4-elimination of the C-3 phosphate and the C-6 proR hydrogen from 5-enolpyruvylshikimate-3-phosphate (EPSP) to yield chorismate, which is the branch point compound that serves as the starting substrate for the three terminal pathways of aromatic amino acid biosynthesis. This reaction introduces a second double bond into the aromatic ring system. This chain is Chorismate synthase, found in Rhodococcus jostii (strain RHA1).